A 177-amino-acid chain; its full sequence is Ribosome maturation factor RimM (177 aa).

The region spanning 100–177 is the PRC barrel domain; that stretch reads EDEYYWSDLV…TVLVAWPSDY (78 aa).

The protein belongs to the RimM family. Binds ribosomal protein uS19.

The protein resides in the cytoplasm. Its function is as follows. An accessory protein needed during the final step in the assembly of 30S ribosomal subunit, possibly for assembly of the head region. Essential for efficient processing of 16S rRNA. May be needed both before and after RbfA during the maturation of 16S rRNA. It has affinity for free ribosomal 30S subunits but not for 70S ribosomes. This Psychrobacter cryohalolentis (strain ATCC BAA-1226 / DSM 17306 / VKM B-2378 / K5) protein is Ribosome maturation factor RimM.